A 314-amino-acid polypeptide reads, in one-letter code: uncharacterized protein (314 aa).

An N-terminal signal peptide occupies residues 1 to 18 (MKVSLLIFLIILVGVIKS). 6 N-linked (GlcNAc...) asparagine glycosylation sites follow: N43, N96, N109, N116, N117, and N161. The disordered stretch occupies residues 252-314 (SMRITKNNPH…PKSIDFHHLF (63 aa)). Low complexity-rich tracts occupy residues 257 to 268 (KNNPHLNNNNNN) and 285 to 296 (KTTTKTSTKTTS).

Its subcellular location is the secreted. This is an uncharacterized protein from Dictyostelium discoideum (Social amoeba).